The following is a 208-amino-acid chain: Translation initiation factor 2 subunit beta (208 aa).

The TRAM domain occupies 144-202 (GIEEGKEYTVEISEVGSSGEGRASFRGFTIFVPGTKKGETVKVKIKKIKNDVAIAEVVS).

Belongs to the eIF-2-beta/eIF-5 family. Heterotrimer composed of an alpha, a beta and a gamma chain.

Its function is as follows. eIF-2 functions in the early steps of protein synthesis by forming a ternary complex with GTP and initiator tRNA. In Thermoplasma volcanium (strain ATCC 51530 / DSM 4299 / JCM 9571 / NBRC 15438 / GSS1), this protein is Translation initiation factor 2 subunit beta (eif2b).